The sequence spans 159 residues: Small ribosomal subunit protein uS7m (159 aa).

This sequence belongs to the universal ribosomal protein uS7 family. As to quaternary structure, part of the small ribosomal subunit.

It localises to the mitochondrion. Its function is as follows. One of the primary rRNA binding proteins, it binds directly to the small rRNA where it nucleates assembly of the head domain of the small subunit. This is Small ribosomal subunit protein uS7m (RPS7) from Reclinomonas americana.